Reading from the N-terminus, the 179-residue chain is Probable DNA-directed RNA polymerase subunit delta (179 aa).

An HTH HARE-type domain is found at 14–81; sequence MSLVELAYEI…GDQRWGLRSW (68 aa). A disordered region spans residues 108–179; that stretch reads VVEEDFDEIE…DDLDDNEEEK (72 aa). Positions 109–179 are enriched in acidic residues; that stretch reads VEEDFDEIEE…DDLDDNEEEK (71 aa).

Belongs to the RpoE family. As to quaternary structure, RNAP is composed of a core of 2 alpha, a beta and a beta' subunits. The core is associated with a delta subunit and one of several sigma factors.

Its function is as follows. Participates in both the initiation and recycling phases of transcription. In the presence of the delta subunit, RNAP displays an increased specificity of transcription, a decreased affinity for nucleic acids, and an increased efficiency of RNA synthesis because of enhanced recycling. The polypeptide is Probable DNA-directed RNA polymerase subunit delta (Bacillus pumilus (strain SAFR-032)).